Consider the following 282-residue polypeptide: MTLIQAILLGIIQGLTEFLPISSTAHLRIIPALAGWEDPGAAFTAIIQIGTLGAVMLYFRRDILSIVKSVATGLWKGNPLHDGEAKMGWMIAAGTLPIVAFGLLFKHEIETTLRSLYWISGALIILALVLSLAEWKIKKRLEEGHPLKSMEDIGWKEALLIGLAQAIALIPGSSRSGTTITGGLLLNLSRETAARFSFLLSLPAVFAAGAFELYKTWDLITADPGNIMNLAVATITSGIVGYLSIAFLLNYLKSHTTSIFIAYRLAAGAGLLLLLGGGTILP.

Helical transmembrane passes span 1 to 21 (MTLI…FLPI), 39 to 59 (PGAA…MLYF), 85 to 105 (AKMG…GLLF), 115 to 135 (SLYW…LAEW), 153 to 173 (IGWK…IPGS), 193 to 213 (AARF…AFEL), 229 to 249 (NLAV…AFLL), and 259 to 279 (IFIA…GGGT).

The protein belongs to the UppP family.

Its subcellular location is the cell inner membrane. It carries out the reaction di-trans,octa-cis-undecaprenyl diphosphate + H2O = di-trans,octa-cis-undecaprenyl phosphate + phosphate + H(+). Catalyzes the dephosphorylation of undecaprenyl diphosphate (UPP). Confers resistance to bacitracin. This is Undecaprenyl-diphosphatase from Chlorobium luteolum (strain DSM 273 / BCRC 81028 / 2530) (Pelodictyon luteolum).